Reading from the N-terminus, the 881-residue chain is Ent-kaurene synthase CPS/KS, chloroplastic (881 aa).

Residues 1-41 (MASSTLIQNRSCGVTSSMSSFQIFRGQPLRFPGTRTPAAVQ) constitute a chloroplast transit peptide. Positions 417, 419, 635, 639, 778, 779, and 786 each coordinate Mg(2+). A DXDDTA motif motif is present at residues 417-422 (DVDDTA). The DDXXD motif motif lies at 635–639 (DDYFD).

This sequence belongs to the terpene synthase family. It depends on Mg(2+) as a cofactor.

The protein resides in the plastid. The protein localises to the chloroplast. The catalysed reaction is (2E,6E,10E)-geranylgeranyl diphosphate = ent-copalyl diphosphate. It carries out the reaction ent-copalyl diphosphate = ent-kaur-16-ene + diphosphate. The enzyme catalyses ent-copalyl diphosphate = ent-beyerene + diphosphate. It catalyses the reaction ent-copalyl diphosphate = ent-sandaracopimara-8(14),15-diene + diphosphate. The catalysed reaction is ent-copalyl diphosphate = ent-isokaurene + diphosphate. It carries out the reaction ent-copalyl diphosphate + H2O = 16alpha-hydroxy-ent-kaurene + diphosphate. It participates in secondary metabolite biosynthesis; terpenoid biosynthesis. In terms of biological role, bifunctional copalyl diphosphate/kaurene synthase involved in the biosynthesis of labdane-related diterpenoids (LRDs) natural products such as ent-beyerene, an antimicrobial compound. Supports the conversion of geranylgeranyl diphosphate (GGPP) to ent-copalyl diphosphate (ent-CDP). Also catalyzes the subsequent cyclization of ent-CDP into many diterpenes, including ent-kaur-16-ene as the major product, and ent-beyerene, ent-sandaracopimaradiene, ent-kaur-15-ene (ent-isokaurene) and 16-hydroxy-ent-kaurene (ent-16-alpha-hydroxy-kaurene) as minor products. This is Ent-kaurene synthase CPS/KS, chloroplastic from Physcomitrium patens (Spreading-leaved earth moss).